The chain runs to 389 residues: Succinate--CoA ligase [ADP-forming] subunit beta (389 aa).

In terms of domain architecture, ATP-grasp spans 9–236 (RDMFEAHGVP…KDAADPLEAK (228 aa)). Residues Lys-45, 52–54 (GRG), Ala-94, and Glu-99 contribute to the ATP site. Mg(2+) contacts are provided by Asn-191 and Asp-205. Residues Asn-256 and 318–320 (GIT) contribute to the substrate site.

Belongs to the succinate/malate CoA ligase beta subunit family. Heterotetramer of two alpha and two beta subunits. The cofactor is Mg(2+).

It catalyses the reaction succinate + ATP + CoA = succinyl-CoA + ADP + phosphate. It carries out the reaction GTP + succinate + CoA = succinyl-CoA + GDP + phosphate. Its pathway is carbohydrate metabolism; tricarboxylic acid cycle; succinate from succinyl-CoA (ligase route): step 1/1. Its function is as follows. Succinyl-CoA synthetase functions in the citric acid cycle (TCA), coupling the hydrolysis of succinyl-CoA to the synthesis of either ATP or GTP and thus represents the only step of substrate-level phosphorylation in the TCA. The beta subunit provides nucleotide specificity of the enzyme and binds the substrate succinate, while the binding sites for coenzyme A and phosphate are found in the alpha subunit. The sequence is that of Succinate--CoA ligase [ADP-forming] subunit beta from Pseudarthrobacter chlorophenolicus (strain ATCC 700700 / DSM 12829 / CIP 107037 / JCM 12360 / KCTC 9906 / NCIMB 13794 / A6) (Arthrobacter chlorophenolicus).